The following is a 456-amino-acid chain: Transcription factor tau subunit sfc1 (456 aa).

Disordered regions lie at residues 394–416 (DRYSNFDEQDNTDLNDTVRGLNT) and 437–456 (HEGFEDLEEIDDDYDDIFGD). Residues 407–416 (LNDTVRGLNT) show a composition bias toward polar residues. The segment covering 441-456 (EDLEEIDDDYDDIFGD) has biased composition (acidic residues).

As to quaternary structure, component of the TFIIIC complex including sfc1, sfc3, sfc4, sfc6 and sfc7. The subunits are organized in two globular domains, tauA and tauB, connected by a proteolysis-sensitive and flexible linker. Interacts with sfc3, sfc4 and sfc6. Phosphorylated.

It localises to the nucleus. Its function is as follows. TFIIIC mediates tRNA and 5S RNA gene activation by binding to intragenic promoter elements. Upstream of the transcription start site, TFIIIC assembles the initiation complex TFIIIB-TFIIIC-tDNA, which is sufficient for RNA polymerase III recruitment and function. Part of the tauA domain of TFIIIC that binds boxA DNA promoter sites of tRNA and similar genes. Participates in the interconnection of tauA with tauB via its contacts with sfc3 and sfc6. Serves as a scaffold critical for tauA-DNA spatial configuration and tauB-DNA stability. Localizes to chromatin insulator sequence without recruiting RNA polymerase III and plays a role in nuclear organization. This Schizosaccharomyces pombe (strain 972 / ATCC 24843) (Fission yeast) protein is Transcription factor tau subunit sfc1 (sfc1).